The primary structure comprises 122 residues: Large ribosomal subunit protein bL12 (122 aa).

Belongs to the bacterial ribosomal protein bL12 family. As to quaternary structure, homodimer. Part of the ribosomal stalk of the 50S ribosomal subunit. Forms a multimeric L10(L12)X complex, where L10 forms an elongated spine to which 2 to 4 L12 dimers bind in a sequential fashion. Binds GTP-bound translation factors.

Functionally, forms part of the ribosomal stalk which helps the ribosome interact with GTP-bound translation factors. Is thus essential for accurate translation. The sequence is that of Large ribosomal subunit protein bL12 from Streptococcus pneumoniae serotype 19F (strain G54).